Consider the following 418-residue polypeptide: Glutamyl-tRNA reductase (418 aa).

Substrate is bound by residues 49–52, Ser-108, 113–115, and Gln-119; these read TCNR and EPQ. Cys-50 serves as the catalytic Nucleophile. 188-193 serves as a coordination point for NADP(+); that stretch reads GAGETI.

This sequence belongs to the glutamyl-tRNA reductase family. In terms of assembly, homodimer.

It catalyses the reaction (S)-4-amino-5-oxopentanoate + tRNA(Glu) + NADP(+) = L-glutamyl-tRNA(Glu) + NADPH + H(+). It participates in porphyrin-containing compound metabolism; protoporphyrin-IX biosynthesis; 5-aminolevulinate from L-glutamyl-tRNA(Glu): step 1/2. In terms of biological role, catalyzes the NADPH-dependent reduction of glutamyl-tRNA(Glu) to glutamate 1-semialdehyde (GSA). In Aliivibrio fischeri (strain MJ11) (Vibrio fischeri), this protein is Glutamyl-tRNA reductase.